A 337-amino-acid chain; its full sequence is tRNA N6-adenosine threonylcarbamoyltransferase (337 aa).

Residues histidine 111 and histidine 115 each coordinate Fe cation. Residues 134 to 138 (LVSGG), aspartate 167, glycine 180, and asparagine 272 contribute to the substrate site. Residue aspartate 300 participates in Fe cation binding.

This sequence belongs to the KAE1 / TsaD family. Requires Fe(2+) as cofactor.

The protein localises to the cytoplasm. The catalysed reaction is L-threonylcarbamoyladenylate + adenosine(37) in tRNA = N(6)-L-threonylcarbamoyladenosine(37) in tRNA + AMP + H(+). In terms of biological role, required for the formation of a threonylcarbamoyl group on adenosine at position 37 (t(6)A37) in tRNAs that read codons beginning with adenine. Is involved in the transfer of the threonylcarbamoyl moiety of threonylcarbamoyl-AMP (TC-AMP) to the N6 group of A37, together with TsaE and TsaB. TsaD likely plays a direct catalytic role in this reaction. This chain is tRNA N6-adenosine threonylcarbamoyltransferase, found in Photorhabdus laumondii subsp. laumondii (strain DSM 15139 / CIP 105565 / TT01) (Photorhabdus luminescens subsp. laumondii).